A 73-amino-acid polypeptide reads, in one-letter code: Translational regulator CsrA (73 aa).

The disordered stretch occupies residues 54–73; that stretch reads ENRAASDSPWSPNSLPQLPV. Over residues 61–73 the composition is skewed to polar residues; the sequence is SPWSPNSLPQLPV.

It belongs to the CsrA/RsmA family. In terms of assembly, homodimer; the beta-strands of each monomer intercalate to form a hydrophobic core, while the alpha-helices form wings that extend away from the core.

The protein localises to the cytoplasm. A translational regulator that binds mRNA to regulate translation initiation and/or mRNA stability. Usually binds in the 5'-UTR at or near the Shine-Dalgarno sequence preventing ribosome-binding, thus repressing translation. Its main target seems to be the major flagellin gene, while its function is anatagonized by FliW. In Treponema pallidum (strain Nichols), this protein is Translational regulator CsrA.